The primary structure comprises 471 residues: P2X purinoceptor 2 (471 aa).

The Cytoplasmic portion of the chain corresponds to 1–42 (MAAAQPKYPAGATARRLARGCWSALWDYETPKVIVVRNRRLG). 6 disulfide bridges follow: C21-C439, C125-C176, C136-C159, C142-C170, C226-C236, and C270-C279. The helical transmembrane segment at 43 to 63 (VLYRAVQLLILLYFVWYVFIV) threads the bilayer. Over 64-337 (QKSYQESETG…IVHGQAGKFS (274 aa)) the chain is Extracellular. Residues K81 and K83 each coordinate ATP. N-linked (GlcNAc...) asparagine glycosylation is present at N133. N-linked (GlcNAc...) asparagine glycosylation occurs at N194. Residue T196 coordinates ATP. 3 residues coordinate ATP: S296, N300, and R302. N-linked (GlcNAc...) asparagine glycosylation is present at N310. K319 contributes to the ATP binding site. The segment at 320–333 (AYGIRIDVIVHGQA) is pore-forming motif. The chain crosses the membrane as a helical span at residues 338 to 358 (LIPTIINLATALTSVGVGSFL). Topologically, residues 359 to 471 (CDWILLTFMN…PTDPKGLAQL (113 aa)) are cytoplasmic. The segment at 400–471 (GQAPPEPGHR…PTDPKGLAQL (72 aa)) is disordered.

It belongs to the P2X receptor family. Homotrimer and heterotrimer; functional P2XRs are organized as homomeric and heteromeric trimers. Homotrimer. Forms heterotrimer with P2RX1. Forms heterotrimer with P2RX6. Forms heterotrimer with P2RX3. As to expression, expressed in both the central and peripheral nervous system, as well as in the pituitary gland.

It localises to the cell membrane. The enzyme catalyses Ca(2+)(in) = Ca(2+)(out). The catalysed reaction is K(+)(in) = K(+)(out). It catalyses the reaction Na(+)(in) = Na(+)(out). With respect to regulation, fast activation by external ATP. Exhibits slow desensitization during prolonged ATP activation. Not sensitive to the ATP agonist:alpha/beta-methylene-ATP. Functionally, ATP-gated nonselective transmembrane cation channel permeable to potassium, sodium and calcium. Activation by extracellular ATP induces a variety of cellular responses, such as excitatory postsynaptic responses in sensory neurons, neuromuscular junctions (NMJ) formation, hearing, perception of taste and peristalsis. In the inner ear, regulates sound transduction and auditory neurotransmission, outer hair cell electromotility, inner ear gap junctions, and K(+) recycling. Mediates synaptic transmission between neurons and from neurons to smooth muscle. This Homo sapiens (Human) protein is P2X purinoceptor 2.